A 105-amino-acid polypeptide reads, in one-letter code: MYAVIETGGKQYKVSEGDVLEIEKLSQETEEQVTFDKVLLVKDDENVKVGTPVLEEAQVEGTVLEHGKGEKVTVFKYKPKKNYRRKQGHRQPFSKVKIDKIKLNG.

The protein belongs to the bacterial ribosomal protein bL21 family. Part of the 50S ribosomal subunit. Contacts protein L20.

Functionally, this protein binds to 23S rRNA in the presence of protein L20. This chain is Large ribosomal subunit protein bL21, found in Natranaerobius thermophilus (strain ATCC BAA-1301 / DSM 18059 / JW/NM-WN-LF).